We begin with the raw amino-acid sequence, 186 residues long: Ribosome-recycling factor (186 aa).

Belongs to the RRF family.

The protein localises to the cytoplasm. In terms of biological role, responsible for the release of ribosomes from messenger RNA at the termination of protein biosynthesis. May increase the efficiency of translation by recycling ribosomes from one round of translation to another. This Janthinobacterium sp. (strain Marseille) (Minibacterium massiliensis) protein is Ribosome-recycling factor.